The chain runs to 235 residues: Zein-alpha PMS1 (235 aa).

A signal peptide spans 1-21 (MAAKIFCLLMLLGLSASAATA).

It belongs to the zein family.

Zeins are major seed storage proteins. This Zea mays (Maize) protein is Zein-alpha PMS1 (ZMPMS1).